Reading from the N-terminus, the 256-residue chain is MDLENAQNRIIDFIRDETGRAGVKGVVVGISGGIDSALTATLAVKALGKDRVLGIHMPESSLTPAVDSEDAEALADWLGIEYRTIDISGIISAFMAAVPESESADRLTKGNLKARTRMSLLYFHANRLNRMVIGTGNKTEILLGYYTKYGDGGVDLEPIGGLYKTGVWELSSRLGIPESLITKKPSAGLWAGQTDEADLGISYVKVDEVLKMIEDGVEPEVILDKTGISADQLNSVTRRIERNEHKRKAPPVPELY.

Gly-29–Ser-36 is an ATP binding site. Asp-35 contacts Mg(2+). Residue Arg-115 participates in deamido-NAD(+) binding. ATP is bound at residue Thr-135. Glu-140 contacts Mg(2+). Residues Lys-148 and Asp-155 each coordinate deamido-NAD(+). 2 residues coordinate ATP: Lys-164 and Ser-186. Deamido-NAD(+) is bound at residue His-245–Lys-246.

It belongs to the NAD synthetase family. Homodimer.

It carries out the reaction deamido-NAD(+) + NH4(+) + ATP = AMP + diphosphate + NAD(+) + H(+). The protein operates within cofactor biosynthesis; NAD(+) biosynthesis; NAD(+) from deamido-NAD(+) (ammonia route): step 1/1. Catalyzes the ATP-dependent amidation of deamido-NAD to form NAD. Uses ammonia as a nitrogen source. The polypeptide is NH(3)-dependent NAD(+) synthetase (Methanosarcina mazei (strain ATCC BAA-159 / DSM 3647 / Goe1 / Go1 / JCM 11833 / OCM 88) (Methanosarcina frisia)).